Here is a 167-residue protein sequence, read N- to C-terminus: Leptin (167 aa).

Positions 1–21 are cleaved as a signal peptide; it reads MHCVPLFCFLWFCHHLYYSQA. A disulfide bridge connects residues Cys-117 and Cys-167.

It belongs to the leptin family.

The protein localises to the secreted. Functionally, key player in the regulation of energy balance and body weight control. Once released into the circulation, has central and peripheral effects by binding LEPR, found in many tissues, which results in the activation of several major signaling pathways. In the hypothalamus, acts as an appetite-regulating factor that induces a decrease in food intake and an increase in energy consumption by inducing anorexinogenic factors and suppressing orexigenic neuropeptides, also regulates bone mass and secretion of hypothalamo-pituitary-adrenal hormones. In the periphery, increases basal metabolism, influences reproductive function, regulates pancreatic beta-cell function and insulin secretion, is pro-angiogenic for endothelial cell and affects innate and adaptive immunity. In the arcuate nucleus of the hypothalamus, activates by depolarization POMC neurons inducing FOS and SOCS3 expression to release anorexigenic peptides and inhibits by hyperpolarization NPY neurons inducing SOCS3 with a consequent reduction on release of orexigenic peptides. In addition to its known satiety inducing effect, has a modulatory role in nutrient absorption. In the intestine, reduces glucose absorption by enterocytes by activating PKC and leading to a sequential activation of p38, PI3K and ERK signaling pathways which exerts an inhibitory effect on glucose absorption. Acts as a growth factor on certain tissues, through the activation of different signaling pathways increases expression of genes involved in cell cycle regulation such as CCND1, via JAK2-STAT3 pathway, or VEGFA, via MAPK1/3 and PI3K-AKT1 pathways. May also play an apoptotic role via JAK2-STAT3 pathway and up-regulation of BIRC5 expression. Pro-angiogenic, has mitogenic activity on vascular endothelial cells and plays a role in matrix remodeling by regulating the expression of matrix metalloproteinases (MMPs) and tissue inhibitors of metalloproteinases (TIMPs). In innate immunity, modulates the activity and function of neutrophils by increasing chemotaxis and the secretion of oxygen radicals. Increases phagocytosis by macrophages and enhances secretion of pro-inflammatory mediators. Increases cytotoxic ability of NK cells. Plays a pro-inflammatory role, in synergy with IL1B, by inducing NOS2 which promotes the production of IL6, IL8 and Prostaglandin E2, through a signaling pathway that involves JAK2, PI3K, MAP2K1/MEK1 and MAPK14/p38. In adaptive immunity, promotes the switch of memory T-cells towards T helper-1 cell immune responses. Increases CD4(+)CD25(-) T-cell proliferation and reduces autophagy during TCR (T-cell receptor) stimulation, through MTOR signaling pathway activation and BCL2 up-regulation. This Sminthopsis crassicaudata (Fat-tailed dunnart) protein is Leptin (LEP).